A 372-amino-acid polypeptide reads, in one-letter code: Lipoyl synthase (372 aa).

The [4Fe-4S] cluster site is built by Cys37, Cys42, Cys48, Cys63, Cys67, Cys70, and Ser292. The region spanning 49-281 (WREGTATVML…ERAALEMGFL (233 aa)) is the Radical SAM core domain. Positions 338–372 (LTAELDPDEPRPPVAPAPASASPARLVPAASLIRR) are disordered. Residues 354–372 (APASASPARLVPAASLIRR) show a composition bias toward low complexity.

The protein belongs to the radical SAM superfamily. Lipoyl synthase family. [4Fe-4S] cluster serves as cofactor.

It localises to the cytoplasm. The catalysed reaction is [[Fe-S] cluster scaffold protein carrying a second [4Fe-4S](2+) cluster] + N(6)-octanoyl-L-lysyl-[protein] + 2 oxidized [2Fe-2S]-[ferredoxin] + 2 S-adenosyl-L-methionine + 4 H(+) = [[Fe-S] cluster scaffold protein] + N(6)-[(R)-dihydrolipoyl]-L-lysyl-[protein] + 4 Fe(3+) + 2 hydrogen sulfide + 2 5'-deoxyadenosine + 2 L-methionine + 2 reduced [2Fe-2S]-[ferredoxin]. Its pathway is protein modification; protein lipoylation via endogenous pathway; protein N(6)-(lipoyl)lysine from octanoyl-[acyl-carrier-protein]: step 2/2. Functionally, catalyzes the radical-mediated insertion of two sulfur atoms into the C-6 and C-8 positions of the octanoyl moiety bound to the lipoyl domains of lipoate-dependent enzymes, thereby converting the octanoylated domains into lipoylated derivatives. The protein is Lipoyl synthase of Sorangium cellulosum (strain So ce56) (Polyangium cellulosum (strain So ce56)).